Consider the following 365-residue polypeptide: MFRLLRWRLGRTLLRAAGRRCGGCTARLLPERAGDAGPGAERLRTRGAPARGHRVLPLLAALAWFSRTAAAEEQPGEDATDEAEAEIIQLLKRAKLSIMKDEPEAAELILHDALRLAYESDNKKAITYTYDLMANLAFIRGQLENAEQLFKATMSYLLGGGMKQEDNAIVEISLKLANIYAAQNKQEFALAGYEFCISTLEGKIEREKELAEDIMSEERANTYLLLGMCLDSCARYLLFSKQLSQAQRMYEKALQICQEIQGERHPQTIVLMSDLATALDAQGHFDDAYIYMQRASDLAREINHPELHMVLSNLAAILIHRERYTQAKEIYQEALKQAELKRDEFSVQHIREELAELSRKSRLLT.

A mitochondrion-targeting transit peptide spans 1 to 52; it reads MFRLLRWRLGRTLLRAAGRRCGGCTARLLPERAGDAGPGAERLRTRGAPARG. TPR repeat units follow at residues 127 to 160, 170 to 203, 220 to 260, 269 to 302, and 308 to 341; these read TYTY…LLGG, VEIS…LEGK, ANTY…CQEI, IVLM…AREI, and HMVL…AELK.

It belongs to the TTC19 family. In terms of assembly, binds to the mature mitochondrial complex III dimer, after the incorporation of the Rieske protein UQCRFS1. Interacts with UQCRC1 and UQCRFS1. Interacts with ZFYVE26 and CHMP4B. Proteolytically cleaved by PARL.

The protein localises to the mitochondrion inner membrane. In terms of biological role, required for the preservation of the structural and functional integrity of mitochondrial respiratory complex III by allowing the physiological turnover of the Rieske protein UQCRFS1. Involved in the clearance of UQCRFS1 N-terminal fragments, which are produced upon incorporation into the complex III and whose presence is detrimental for its catalytic activity. The sequence is that of Tetratricopeptide repeat protein 19, mitochondrial (Ttc19) from Rattus norvegicus (Rat).